The following is a 101-amino-acid chain: MNSIVNFSQQLIQNFQEVSQKTVADSSNLKAFAYLGAGLAMIGVIGVGAGQGYAAGKACDAIARNPEAQKQVFRVLVIGTAISETSSIYALLVALILIFVG.

Transmembrane regions (helical) follow at residues 31–51 and 81–101; these read AFAYLGAGLAMIGVIGVGAGQ and AISETSSIYALLVALILIFVG.

The protein belongs to the ATPase C chain family. In terms of assembly, F-type ATPases have 2 components, F(1) - the catalytic core - and F(0) - the membrane proton channel. F(1) has five subunits: alpha(3), beta(3), gamma(1), delta(1), epsilon(1). F(0) has three main subunits: a(1), b(2) and c(10-14). The alpha and beta chains form an alternating ring which encloses part of the gamma chain. F(1) is attached to F(0) by a central stalk formed by the gamma and epsilon chains, while a peripheral stalk is formed by the delta and b chains.

The protein resides in the cell membrane. Its function is as follows. F(1)F(0) ATP synthase produces ATP from ADP in the presence of a proton or sodium gradient. F-type ATPases consist of two structural domains, F(1) containing the extramembraneous catalytic core and F(0) containing the membrane proton channel, linked together by a central stalk and a peripheral stalk. During catalysis, ATP synthesis in the catalytic domain of F(1) is coupled via a rotary mechanism of the central stalk subunits to proton translocation. In terms of biological role, key component of the F(0) channel; it plays a direct role in translocation across the membrane. A homomeric c-ring of between 10-14 subunits forms the central stalk rotor element with the F(1) delta and epsilon subunits. This Mesomycoplasma hyopneumoniae (strain 7448) (Mycoplasma hyopneumoniae) protein is ATP synthase subunit c.